The chain runs to 381 residues: E3 ubiquitin-protein ligase RNF13 (381 aa).

An N-terminal signal peptide occupies residues 1–34 (MLLSIGMLMLSATQIYTIVTVQLFAFLNLLPVEA). Residues 35–182 (DILAYNFENG…IPEFSLPLEY (148 aa)) are Lumenal-facing. Residues 64 to 160 (LKGFLINSKP…GEASANSLKE (97 aa)) enclose the PA domain. N-linked (GlcNAc...) asparagine glycosylation is present at Asn88. The chain crosses the membrane as a helical span at residues 183–203 (YLIPFLIIVGICLILIVIFMI). The Cytoplasmic portion of the chain corresponds to 204 to 381 (TKFVQDRHRA…ERDYRVTNTV (178 aa)). The RING-type; atypical zinc finger occupies 240–282 (CAICLDEYEDGDKLRILPCSHAYHCKCVDPWLTKTKKTCPVCK). Positions 285–381 (VVPSQGDSDS…ERDYRVTNTV (97 aa)) are disordered. Acidic residues-rich tracts occupy residues 292-305 (SDSE…ENEV) and 339-353 (SEYE…DSSD). The span at 370 to 381 (NDERDYRVTNTV) shows a compositional bias: basic and acidic residues.

As to expression, widely expressed (at protein level). Lowest levels in the liver, moderate levels in the heart, intestine and spleen, and high levels in skeletal muscle, kidney, proventriculus and brain. Also expressed in inner ear after noise exposure.

Its subcellular location is the endoplasmic reticulum membrane. It is found in the late endosome membrane. It localises to the lysosome membrane. The protein resides in the nucleus inner membrane. The catalysed reaction is S-ubiquitinyl-[E2 ubiquitin-conjugating enzyme]-L-cysteine + [acceptor protein]-L-lysine = [E2 ubiquitin-conjugating enzyme]-L-cysteine + N(6)-ubiquitinyl-[acceptor protein]-L-lysine.. The protein operates within protein modification; protein ubiquitination. In terms of biological role, E3 ubiquitin-protein ligase that regulates cell proliferation. Involved in apoptosis regulation. Mediates ER stress-induced activation of JNK signaling pathway and apoptosis by promoting ERN1 activation and splicing of XBP1 mRNA. The sequence is that of E3 ubiquitin-protein ligase RNF13 from Gallus gallus (Chicken).